The primary structure comprises 578 residues: PX domain-containing protein kinase-like protein (578 aa).

Residues 14–126 (LDDTVPLTAA…KFLDPNNYSA (113 aa)) enclose the PX domain. A Protein kinase domain is found at 88-481 (FIAERQKGLQ…LENSEEHSAK (394 aa)). 2 stretches are compositionally biased toward basic residues: residues 437 to 448 (IHQHRRLTRAQS) and 457 to 469 (KKRK…KSKR). Disordered regions lie at residues 437 to 548 (IHQH…NGMS) and 559 to 578 (FQKG…PKIG). The segment covering 483-513 (SNSNNSAGSGASSPLTSPSSPTPPSTSGISA) has biased composition (low complexity). Pro residues predominate over residues 514–530 (LPPPPPPPPPPAAPLPP). In terms of domain architecture, WH2 spans 548-567 (SRGALLSSIQNFQKGTLRKA). Positions 568-578 (KTCDHSAPKIG) are enriched in basic and acidic residues.

Belongs to the protein kinase superfamily. As to expression, widely expressed in all tissues examined except in heart. Isoform 1 is expressed in high levels in the brain, skeletal muscle, spleen and testis. Isoform 7 expression has yet to be demonstrated.

Its subcellular location is the cytoplasm. It localises to the cell membrane. Functionally, binds to and modulates brain Na,K-ATPase subunits ATP1B1 and ATP1B3 and may thereby participate in the regulation of electrical excitability and synaptic transmission. May not display kinase activity. The chain is PX domain-containing protein kinase-like protein from Homo sapiens (Human).